A 507-amino-acid chain; its full sequence is ATP synthase subunit alpha, chloroplastic (507 aa).

Position 170 to 177 (170 to 177 (GDRQTGKT)) interacts with ATP.

Belongs to the ATPase alpha/beta chains family. In terms of assembly, F-type ATPases have 2 components, CF(1) - the catalytic core - and CF(0) - the membrane proton channel. CF(1) has five subunits: alpha(3), beta(3), gamma(1), delta(1), epsilon(1). CF(0) has four main subunits: a, b, b' and c.

Its subcellular location is the plastid. It is found in the chloroplast thylakoid membrane. The enzyme catalyses ATP + H2O + 4 H(+)(in) = ADP + phosphate + 5 H(+)(out). Functionally, produces ATP from ADP in the presence of a proton gradient across the membrane. The alpha chain is a regulatory subunit. The chain is ATP synthase subunit alpha, chloroplastic from Dioscorea elephantipes (Elephant's foot yam).